Here is a 323-residue protein sequence, read N- to C-terminus: Estradiol 17 beta-dehydrogenase 5 (323 aa).

Residues 20-24 (GFGTY) and aspartate 50 contribute to the NADP(+) site. Tyrosine 55 acts as the Proton donor in catalysis. Residue histidine 117 participates in substrate binding. Residues 166–167 (SN), glutamine 190, 216–221 (YSALGS), and 270–280 (KSFSEKRIKEN) contribute to the NADP(+) site.

It belongs to the aldo/keto reductase family. Monomer. In terms of processing, three forms are detected, probably due to post-translational modifications. As to expression, mainly found in liver. Also expressed weakly in kidney.

Active toward androgens, estrogens, and xenobiotic substrates. Also exhibits low 20 alpha-HSD activity. Shows a-stereospecificity in hydrogen transfer between cofactors and substrates (A-specific). Preferentially catalyzes the reduction of 4-androstenedione, 5-alpha-androstane-3,17-dione, androsterone and dehydroepiandrosterone to testosterone, dihydrotestosterone, 5-alpha-androstane-3-alpha,17-beta-diol and 5-androstene-3-beta,17-beta-diol, respectively. This Mus musculus (Mouse) protein is Estradiol 17 beta-dehydrogenase 5 (Akr1c6).